The following is a 274-amino-acid chain: Large ribosomal subunit protein uL2 (274 aa).

Positions 195-274 (VGNSDHGLES…SKYIIERRKK (80 aa)) are disordered. 2 stretches are compositionally biased toward basic residues: residues 209 to 220 (GRSRWQGRRPRN) and 244 to 264 (PRSR…KKQS).

This sequence belongs to the universal ribosomal protein uL2 family. In terms of assembly, part of the 50S ribosomal subunit. Forms a bridge to the 30S subunit in the 70S ribosome.

Its function is as follows. One of the primary rRNA binding proteins. Required for association of the 30S and 50S subunits to form the 70S ribosome, for tRNA binding and peptide bond formation. It has been suggested to have peptidyltransferase activity; this is somewhat controversial. Makes several contacts with the 16S rRNA in the 70S ribosome. The chain is Large ribosomal subunit protein uL2 from Bacteroides fragilis (strain ATCC 25285 / DSM 2151 / CCUG 4856 / JCM 11019 / LMG 10263 / NCTC 9343 / Onslow / VPI 2553 / EN-2).